The chain runs to 198 residues: Imidazoleglycerol-phosphate dehydratase (198 aa).

The protein belongs to the imidazoleglycerol-phosphate dehydratase family.

The protein localises to the cytoplasm. The enzyme catalyses D-erythro-1-(imidazol-4-yl)glycerol 3-phosphate = 3-(imidazol-4-yl)-2-oxopropyl phosphate + H2O. It participates in amino-acid biosynthesis; L-histidine biosynthesis; L-histidine from 5-phospho-alpha-D-ribose 1-diphosphate: step 6/9. The protein is Imidazoleglycerol-phosphate dehydratase of Agrobacterium fabrum (strain C58 / ATCC 33970) (Agrobacterium tumefaciens (strain C58)).